The primary structure comprises 268 residues: Tryptophan synthase alpha chain (268 aa).

Catalysis depends on proton acceptor residues E49 and D60.

The protein belongs to the TrpA family. In terms of assembly, tetramer of two alpha and two beta chains.

The enzyme catalyses (1S,2R)-1-C-(indol-3-yl)glycerol 3-phosphate + L-serine = D-glyceraldehyde 3-phosphate + L-tryptophan + H2O. It functions in the pathway amino-acid biosynthesis; L-tryptophan biosynthesis; L-tryptophan from chorismate: step 5/5. Its function is as follows. The alpha subunit is responsible for the aldol cleavage of indoleglycerol phosphate to indole and glyceraldehyde 3-phosphate. The chain is Tryptophan synthase alpha chain from Escherichia coli O81 (strain ED1a).